The primary structure comprises 362 residues: 2-oxoglutarate-dependent dioxygenase lolO1 (362 aa).

The region spanning 199 to 312 is the Fe2OG dioxygenase domain; that stretch reads TWNYFLGQPV…RYSLVFFGHL (114 aa). Fe cation is bound by residues His222, Asp224, and His280. Position 303 (Arg303) interacts with 2-oxoglutarate.

Belongs to the iron/ascorbate-dependent oxidoreductase family. Fe(2+) is required as a cofactor.

The protein operates within alkaloid biosynthesis. Its function is as follows. 2-oxoglutarate-dependent dioxygenase; part of the gene cluster that mediates the biosynthesis of loline alkaloids, potent insecticidal agents composed of a pyrrolizidine ring system and an uncommon ether bridge linking carbons 2 and 7. Lolines are structurally differentiated by the various modifications of the L-amino group and include norloline, loline, N-methylloline, N-acetylloline, N-acetylnorloline, and N-formylloline. The first committed step is the condensation of O-acetyl-L-homoserine (derived from L-aspartic acid) and L-proline, probably catalyzed by the gamma-type pyridoxal 5'-phosphate(PLP)-dependent enzyme lolC, to give the diamino diacid, NACPP. Ensuing cyclization, decarboxylation, and acetylation steps yield 1-exo-acetamidopyrrolizidine (AcAP). LolO is required for installation of the ether bridge upon the pathway intermediate, 1-exo-acetamidopyrrolizidine (AcAP). In sequential 2-oxoglutarate- and O(2)-consuming steps, lolO removes hydrogens from C2 and C7 of AcAP to form both carbon-oxygen bonds in N-acetylnorloline (NANL), the precursor to all other lolines. The enzymes lolD, lolE, lolF and lolT have also been proposed to be involved in the ether-bridge installation. Further processing of the exocyclic moiety of NANL by fungal N-acetamidase (LolN), methyltransferase (LolM), and cytochrome P450 (LolP) enzymes, with occasional involvement of a plant acetyltransferase, generates the other known lolines. LolN transforms NANL to norlonine which is monomethylated and dimethylated to respectively lonine and N-methyllonine (NML) by lolM. LolP catalyzes hydroxylation of the methyl group in N-methylloline (NML) and further oxygenation to N-formylloline (NFL). A plant acetyltransferase is responsible for the acetylation of loline to form N-acetylloline (NAL). LolA might interact with aspartate kinase to prevent feedback inhibition of its activity by these end products and thereby promote production of l-homoserine from l-aspartate. In Epichloe uncinata (Endophyte fungus), this protein is 2-oxoglutarate-dependent dioxygenase lolO1.